Consider the following 224-residue polypeptide: Transcription cofactor HES-6 (224 aa).

The interval 1 to 31 (MAPPAAPGRDRVGREDEDGWETRGDRKARKP) is disordered. The segment covering 8–25 (GRDRVGREDEDGWETRGD) has biased composition (basic and acidic residues). In terms of domain architecture, bHLH spans 25–77 (DRKARKPLVEKKRRARINESLQELRLLLAGAEVQAKLENAEVLELTVRRVQGV). One can recognise an Orange domain in the interval 96 to 129 (FAAGYIQCMHEVHTFVSTCQAIDATVAAELLNHL). Low complexity predominate over residues 147–161 (DALAGPPRAPGRSGW). The segment at 147-205 (DALAGPPRAPGRSGWPAGGAPGSPIPSPPGPGDDLCSDLEEAPEAELSQAPAEGPDLVP) is disordered. The segment covering 181–190 (LCSDLEEAPE) has biased composition (acidic residues). A WRPW motif motif is present at residues 221-224 (WRPW).

Transcription repression requires formation of a complex with a corepressor protein of the Groucho/TLE family. Interacts with HES1.

The protein localises to the nucleus. Functionally, does not bind DNA itself but suppresses both HES1-mediated N box-dependent transcriptional repression and binding of HES1 to E box sequences. Also suppresses HES1-mediated inhibition of the heterodimer formed by ASCL1/MASH1 and TCF3/E47, allowing ASCL1 and TCF3 to up-regulate transcription in its presence. Promotes cell differentiation. The sequence is that of Transcription cofactor HES-6 from Homo sapiens (Human).